The sequence spans 180 residues: Large ribosomal subunit protein uL6 (180 aa).

The protein belongs to the universal ribosomal protein uL6 family. In terms of assembly, part of the 50S ribosomal subunit.

Its function is as follows. This protein binds to the 23S rRNA, and is important in its secondary structure. It is located near the subunit interface in the base of the L7/L12 stalk, and near the tRNA binding site of the peptidyltransferase center. The chain is Large ribosomal subunit protein uL6 from Picosynechococcus sp. (strain ATCC 27264 / PCC 7002 / PR-6) (Agmenellum quadruplicatum).